A 194-amino-acid polypeptide reads, in one-letter code: Holliday junction branch migration complex subunit RuvA (194 aa).

Residues 1-64 (MISRLTGKLV…EDAHLLFGFA (64 aa)) form a domain I region. The segment at 65–143 (TAEERKTFRQ…AHAVTDGLFA (79 aa)) is domain II. Residues 144–147 (AAPA) form a flexible linker region. The interval 147–194 (AADETEDIVGTLLALGYSEREAKAAVKGVPKGTDVGEGVRLALKNLLK) is domain III.

Belongs to the RuvA family. As to quaternary structure, homotetramer. Forms an RuvA(8)-RuvB(12)-Holliday junction (HJ) complex. HJ DNA is sandwiched between 2 RuvA tetramers; dsDNA enters through RuvA and exits via RuvB. An RuvB hexamer assembles on each DNA strand where it exits the tetramer. Each RuvB hexamer is contacted by two RuvA subunits (via domain III) on 2 adjacent RuvB subunits; this complex drives branch migration. In the full resolvosome a probable DNA-RuvA(4)-RuvB(12)-RuvC(2) complex forms which resolves the HJ.

It localises to the cytoplasm. Its function is as follows. The RuvA-RuvB-RuvC complex processes Holliday junction (HJ) DNA during genetic recombination and DNA repair, while the RuvA-RuvB complex plays an important role in the rescue of blocked DNA replication forks via replication fork reversal (RFR). RuvA specifically binds to HJ cruciform DNA, conferring on it an open structure. The RuvB hexamer acts as an ATP-dependent pump, pulling dsDNA into and through the RuvAB complex. HJ branch migration allows RuvC to scan DNA until it finds its consensus sequence, where it cleaves and resolves the cruciform DNA. The sequence is that of Holliday junction branch migration complex subunit RuvA from Neisseria meningitidis serogroup C / serotype 2a (strain ATCC 700532 / DSM 15464 / FAM18).